A 267-amino-acid chain; its full sequence is MLLAWVHTFLLSNMLLAEAYGSGGCFWDNGHLYREDQPSPAPGLRCLNWLAAQGSGESLAQPSPGNHNYCRNPDQDPRGPWCYISSETGVPEKRPCEDLRCPETTSQAPPPPPPSSTTELEEKFGVPGDKETQVFPPANALPARSEAAEVQPVIGISQRVRMNSKEKKDLGTLGYVLGVTMTVIIIAIGVGIVLGYTYKRGKDLKEQHEQKVCEREMQRITLPLSAFTNPTCEIMDEKTIIVHSNQTPADVQEGSTLLTDQAGTPGA.

Residues Met-1–Gly-21 form the signal peptide. Over Ser-22–Thr-172 the chain is Extracellular. In terms of domain architecture, Kringle spans Gly-24–Cys-101. 3 disulfide bridges follow: Cys-25/Cys-101, Cys-46/Cys-82, and Cys-70/Cys-96. Residues Pro-91–Cys-101 show a composition bias toward basic and acidic residues. Residues Pro-91–Glu-122 are disordered. Residues Leu-173–Val-193 form a helical membrane-spanning segment. At Leu-194–Ala-267 the chain is on the cytoplasmic side.

It localises to the cell membrane. Negative regulator of hepatic phosphatidylinositol 3-kinase (PI3K) activity. The polypeptide is Phosphoinositide-3-kinase-interacting protein 1 (Pik3ip1) (Rattus norvegicus (Rat)).